Reading from the N-terminus, the 593-residue chain is NADH-quinone oxidoreductase subunit C/D (593 aa).

Residues 1-184 (MTADNALYIP…DPYSLTLAKQ (184 aa)) form an NADH dehydrogenase I subunit C region. Residues 208–593 (DYMFLNLGPN…IDFVMADVDR (386 aa)) are NADH dehydrogenase I subunit D.

It in the N-terminal section; belongs to the complex I 30 kDa subunit family. This sequence in the C-terminal section; belongs to the complex I 49 kDa subunit family. NDH-1 is composed of 13 different subunits. Subunits NuoB, CD, E, F, and G constitute the peripheral sector of the complex.

The protein localises to the cell inner membrane. The catalysed reaction is a quinone + NADH + 5 H(+)(in) = a quinol + NAD(+) + 4 H(+)(out). In terms of biological role, NDH-1 shuttles electrons from NADH, via FMN and iron-sulfur (Fe-S) centers, to quinones in the respiratory chain. The immediate electron acceptor for the enzyme in this species is believed to be ubiquinone. Couples the redox reaction to proton translocation (for every two electrons transferred, four hydrogen ions are translocated across the cytoplasmic membrane), and thus conserves the redox energy in a proton gradient. In Pseudomonas syringae pv. syringae (strain B728a), this protein is NADH-quinone oxidoreductase subunit C/D.